Consider the following 399-residue polypeptide: Exodeoxyribonuclease 7 large subunit (399 aa).

Belongs to the XseA family. As to quaternary structure, heterooligomer composed of large and small subunits.

The protein resides in the cytoplasm. It carries out the reaction Exonucleolytic cleavage in either 5'- to 3'- or 3'- to 5'-direction to yield nucleoside 5'-phosphates.. In terms of biological role, bidirectionally degrades single-stranded DNA into large acid-insoluble oligonucleotides, which are then degraded further into small acid-soluble oligonucleotides. This Clostridium botulinum (strain Eklund 17B / Type B) protein is Exodeoxyribonuclease 7 large subunit.